The sequence spans 1094 residues: Probable arabinosyltransferase A (1094 aa).

13 consecutive transmembrane segments (helical) span residues isoleucine 12–leucine 34, alanine 205–leucine 224, glycine 247–alanine 269, valine 322–leucine 344, serine 356–phenylalanine 375, alanine 408–alanine 430, glycine 451–valine 470, phenylalanine 519–leucine 536, glycine 543–phenylalanine 565, glycine 575–leucine 597, threonine 604–tyrosine 626, isoleucine 641–tryptophan 663, and isoleucine 684–alanine 706.

It belongs to the emb family.

It localises to the cell membrane. Arabinosyl transferase responsible for the polymerization of arabinose into the arabinan of arabinogalactan. The protein is Probable arabinosyltransferase A (embA) of Mycobacterium tuberculosis (strain CDC 1551 / Oshkosh).